The chain runs to 621 residues: F-box/LRR-repeat protein 4 (621 aa).

Arginine 28 carries the asymmetric dimethylarginine modification. The F-box domain maps to 277-332 (NGYFDKLPYELIQLILNHLTLPDLCRLAQTCKLLSQHCCDPLQYIHLNLQPYWAKL). 9 LRR repeats span residues 376–397 (ELVR…EVIS), 402–421 (NLQA…AFNH), 427–448 (SLKR…SILN), 452–474 (ELQH…ASMI), 480–501 (KLRT…AELA), 504–524 (CPLL…STGC), 532–558 (LPNL…ACNC), 559–583 (TRLQ…LLES), and 584–609 (CKDL…LNAS).

In terms of assembly, part of a SCF (SKP1-CUL1-F-box) protein ligase complex. Interacts with VCP. Interacts with PPTC7; this interaction promotes destruction of BNIP3 and NIX and mitophagy suppression. As to expression, expressed in heart, kidney, liver, lung, pancreas, and placenta, but not in skeletal muscle.

It is found in the cytoplasm. The protein localises to the nucleus. It localises to the mitochondrion outer membrane. Functionally, substrate-recognition component of the mitochondria-localized SCF-FBXL4 ubiquitin E3 ligase complex that plays a role in the restriction of mitophagy by controlling the degradation of BNIP3 and NIX mitophagy receptors. Rescues also mitochondrial injury through reverting hyperactivation of DRP1-mediated mitochondrial fission. This Homo sapiens (Human) protein is F-box/LRR-repeat protein 4 (FBXL4).